A 446-amino-acid polypeptide reads, in one-letter code: tRNA modification GTPase MnmE (446 aa).

Arginine 22, glutamate 80, and arginine 119 together coordinate (6S)-5-formyl-5,6,7,8-tetrahydrofolate. One can recognise a TrmE-type G domain in the interval 215-370; sequence GFKVAIIGKP…LILALENIMN (156 aa). A K(+)-binding site is contributed by asparagine 225. GTP contacts are provided by residues 225–230, 244–250, and 269–272; these read NVGKSS, SDIAGTT, and DTAG. Serine 229 contacts Mg(2+). 3 residues coordinate K(+): serine 244, isoleucine 246, and threonine 249. Threonine 250 provides a ligand contact to Mg(2+). Lysine 446 lines the (6S)-5-formyl-5,6,7,8-tetrahydrofolate pocket.

It belongs to the TRAFAC class TrmE-Era-EngA-EngB-Septin-like GTPase superfamily. TrmE GTPase family. In terms of assembly, homodimer. Heterotetramer of two MnmE and two MnmG subunits. K(+) is required as a cofactor.

It is found in the cytoplasm. Its function is as follows. Exhibits a very high intrinsic GTPase hydrolysis rate. Involved in the addition of a carboxymethylaminomethyl (cmnm) group at the wobble position (U34) of certain tRNAs, forming tRNA-cmnm(5)s(2)U34. The chain is tRNA modification GTPase MnmE from Sulfurimonas denitrificans (strain ATCC 33889 / DSM 1251) (Thiomicrospira denitrificans (strain ATCC 33889 / DSM 1251)).